The following is a 412-amino-acid chain: Serine hydroxymethyltransferase (412 aa).

(6S)-5,6,7,8-tetrahydrofolate is bound by residues leucine 117 and 121 to 123 (GHL). Lysine 226 bears the N6-(pyridoxal phosphate)lysine mark.

This sequence belongs to the SHMT family. In terms of assembly, homodimer. The cofactor is pyridoxal 5'-phosphate.

The protein localises to the cytoplasm. It catalyses the reaction (6R)-5,10-methylene-5,6,7,8-tetrahydrofolate + glycine + H2O = (6S)-5,6,7,8-tetrahydrofolate + L-serine. The protein operates within one-carbon metabolism; tetrahydrofolate interconversion. Its pathway is amino-acid biosynthesis; glycine biosynthesis; glycine from L-serine: step 1/1. Catalyzes the reversible interconversion of serine and glycine with tetrahydrofolate (THF) serving as the one-carbon carrier. This reaction serves as the major source of one-carbon groups required for the biosynthesis of purines, thymidylate, methionine, and other important biomolecules. Also exhibits THF-independent aldolase activity toward beta-hydroxyamino acids, producing glycine and aldehydes, via a retro-aldol mechanism. The polypeptide is Serine hydroxymethyltransferase (Staphylococcus epidermidis (strain ATCC 35984 / DSM 28319 / BCRC 17069 / CCUG 31568 / BM 3577 / RP62A)).